The chain runs to 241 residues: NH(3)-dependent NAD(+) synthetase (241 aa).

An ATP-binding site is contributed by 29 to 36; sequence GISGGIDS. Aspartate 35 provides a ligand contact to Mg(2+). Deamido-NAD(+) is bound at residue arginine 110. Position 135 (glutamate 135) interacts with Mg(2+). Lysine 143 and aspartate 150 together coordinate deamido-NAD(+). Lysine 159 and serine 181 together coordinate ATP. Residue 226 to 227 participates in deamido-NAD(+) binding; that stretch reads HK.

The protein belongs to the NAD synthetase family. Homodimer.

It catalyses the reaction deamido-NAD(+) + NH4(+) + ATP = AMP + diphosphate + NAD(+) + H(+). It participates in cofactor biosynthesis; NAD(+) biosynthesis; NAD(+) from deamido-NAD(+) (ammonia route): step 1/1. Functionally, catalyzes the ATP-dependent amidation of deamido-NAD to form NAD. Uses ammonia as a nitrogen source. This is NH(3)-dependent NAD(+) synthetase from Finegoldia magna (strain ATCC 29328 / DSM 20472 / WAL 2508) (Peptostreptococcus magnus).